Here is a 273-residue protein sequence, read N- to C-terminus: MNQLRKIIESAFEKKEYISNNNIDSTVNNAVREIMDRLDNGTLRISEKINGTWITHQWLKKAIMLAFHTMDNQLITWGGGVFFDKFPMKFSGWDHTRFENKKLRIIPPATVRYGAYIADNTVIMPSYINLGAYIDVGTMIDTWATVGSCAQIGKYVHLSGGVGIGGVLEPIQTNPTIIEDNCFIGSRSEIVEGVIVEKGAVISMGVFIGQSTKIYDRASGNIYYGRVPAGSVVIPGSLPSKDGRVNTYCAVIVKTVDSKTKNKVKINNLLRDI.

R104 and D141 together coordinate substrate.

This sequence belongs to the transferase hexapeptide repeat family. Homotrimer.

The protein resides in the cytoplasm. The enzyme catalyses (S)-2,3,4,5-tetrahydrodipicolinate + succinyl-CoA + H2O = (S)-2-succinylamino-6-oxoheptanedioate + CoA. It functions in the pathway amino-acid biosynthesis; L-lysine biosynthesis via DAP pathway; LL-2,6-diaminopimelate from (S)-tetrahydrodipicolinate (succinylase route): step 1/3. In Blochmanniella pennsylvanica (strain BPEN), this protein is 2,3,4,5-tetrahydropyridine-2,6-dicarboxylate N-succinyltransferase.